A 259-amino-acid chain; its full sequence is Dihydroorotate dehydrogenase B (NAD(+)), electron transfer subunit (259 aa).

Residues 2–102 (MQKQNMIVVN…LGPLGHGFPV (101 aa)) form the FAD-binding FR-type domain. Residues 53 to 56 (RPIS), 70 to 72 (LYR), and 77 to 78 (GT) each bind FAD. The [2Fe-2S] cluster site is built by cysteine 221, cysteine 226, cysteine 229, and cysteine 246.

The protein belongs to the PyrK family. As to quaternary structure, heterotetramer of 2 PyrK and 2 PyrD type B subunits. [2Fe-2S] cluster serves as cofactor. The cofactor is FAD.

The protein operates within pyrimidine metabolism; UMP biosynthesis via de novo pathway; orotate from (S)-dihydroorotate (NAD(+) route): step 1/1. Responsible for channeling the electrons from the oxidation of dihydroorotate from the FMN redox center in the PyrD type B subunit to the ultimate electron acceptor NAD(+). This chain is Dihydroorotate dehydrogenase B (NAD(+)), electron transfer subunit, found in Bacillus cereus (strain ZK / E33L).